A 725-amino-acid chain; its full sequence is Polyribonucleotide nucleotidyltransferase (725 aa).

D506 and D512 together coordinate Mg(2+). In terms of domain architecture, KH spans 571–631 (PLIEQFAIDP…QNIIDACEHI (61 aa)). An S1 motif domain is found at 657–724 (DEVVIGKVER…KKDRIELSSA (68 aa)).

Belongs to the polyribonucleotide nucleotidyltransferase family. Mg(2+) is required as a cofactor.

It localises to the cytoplasm. The enzyme catalyses RNA(n+1) + phosphate = RNA(n) + a ribonucleoside 5'-diphosphate. Involved in mRNA degradation. Catalyzes the phosphorolysis of single-stranded polyribonucleotides processively in the 3'- to 5'-direction. The polypeptide is Polyribonucleotide nucleotidyltransferase (Aliarcobacter butzleri (strain RM4018) (Arcobacter butzleri)).